The following is a 60-amino-acid chain: MDKKLLAILACPVCKGDLKYDREKQELVCKNDGMAFPIRDGIPVMLEKEARTLTTDERLG.

Belongs to the UPF0434 family.

The protein is UPF0434 protein HCH_02705 of Hahella chejuensis (strain KCTC 2396).